A 106-amino-acid polypeptide reads, in one-letter code: AATCKETPPTWSGHLFEISTDNPRRADISYSREEKKIDTTDYKGVPLRTTLDDYATGTKYCRKSNLTGTIPTFGVPDKLPSPAGPHYLGGKLPSTGVLVLDFYGEK.

Asn65 carries an N-linked (GlcNAc...) asparagine glycan.

In terms of assembly, probable heterotrimer consisting of an alpha chain and two beta chains. The alpha chain can probably have different glycosylation states. Glycosylated.

Functionally, lectin with affinity for N-acetyl-galactosamine, carragenan and glycoprotein porcine stomach mucin (PSM). Has metal-independent hemagglutinating activity towards erythrocytes from rabbit and human. Hemagglutinating activity is not inhibited by D-galactose, D-glucose, D-mannose, D-fucose, methyl-alpha-D-galactopyranoside, methyl-alpha-D-glucopyranoside, N-acetyl-glucosamine, N-acetyl-mannosamine, D-fructose, alpha-D-lactose, beta-D-lactose, D-lactulose, D-sucrose, fucoidan or glycoproteins thyroglobulin and ovalmucoid. This Haliclona caerulea (Blue Caribbean sponge) protein is Halilectin 3, beta chain.